The chain runs to 2958 residues: Protein CSF1 (2958 aa).

Over 1 to 17 the chain is Cytoplasmic; it reads MEAISQLRGVPLTHQKD. A helical; Signal-anchor for type II membrane protein transmembrane segment spans residues 18-38; sequence FSWVFLVDWILTVVVCLTMIF. The Extracellular segment spans residues 39-2958; that stretch reads YMGRIYAYLV…QYVKILDDTH (2920 aa). 10 N-linked (GlcNAc...) asparagine glycosylation sites follow: Asn82, Asn117, Asn144, Asn271, Asn478, Asn530, Asn816, Asn821, Asn839, and Asn892. The disordered stretch occupies residues 813-834; the sequence is GYQNSSLKNESEDKGPMKRSDL. Positions 821–834 are enriched in basic and acidic residues; that stretch reads NESEDKGPMKRSDL. Residues 1175-1196 are disordered; the sequence is MEPSRASFSEDDNDEEADPSSF. Acidic residues predominate over residues 1183-1192; that stretch reads SEDDNDEEAD. 13 N-linked (GlcNAc...) asparagine glycosylation sites follow: Asn1309, Asn1368, Asn1453, Asn1785, Asn1921, Asn2130, Asn2146, Asn2280, Asn2337, Asn2520, Asn2578, Asn2719, and Asn2869.

It belongs to the CSF1 family. Interacts with MCD4; CSF1 channels phosphatidylethanolamine to MCD4 in the endoplasmic reticulum at contact sites to support GPI anchor biosynthesis.

The protein localises to the cell membrane. It is found in the endoplasmic reticulum membrane. Its subcellular location is the mitochondrion membrane. Tube-forming lipid transport protein which provides phosphatidylethanolamine for glycosylphosphatidylinositol (GPI) anchor synthesis in the endoplasmic reticulum. Required for the glucose and other nutrients uptake at low temperature. In Saccharomyces cerevisiae (strain ATCC 204508 / S288c) (Baker's yeast), this protein is Protein CSF1.